The chain runs to 390 residues: Sulfate adenylyltransferase (390 aa).

It belongs to the sulfate adenylyltransferase family.

The enzyme catalyses sulfate + ATP + H(+) = adenosine 5'-phosphosulfate + diphosphate. The protein operates within sulfur metabolism; hydrogen sulfide biosynthesis; sulfite from sulfate: step 1/3. In Synechocystis sp. (strain ATCC 27184 / PCC 6803 / Kazusa), this protein is Sulfate adenylyltransferase (sat).